The chain runs to 457 residues: Bifunctional protein GlmU (457 aa).

The tract at residues 1–230 is pyrophosphorylase; the sequence is MPLSLPLHIV…PREVEGVNDL (230 aa). UDP-N-acetyl-alpha-D-glucosamine is bound by residues 12-15, Lys-26, Gln-78, 83-84, 105-107, Gly-140, Glu-155, Asn-170, and Asn-228; these read LAAG, GT, and YGD. Position 107 (Asp-107) interacts with Mg(2+). A Mg(2+)-binding site is contributed by Asn-228. The segment at 231–251 is linker; sequence WQLTQLERTWQIRAARALCLQ. Residues 252 to 457 are N-acetyltransferase; that stretch reads GARVADPARL…DGWQRPKKKT (206 aa). UDP-N-acetyl-alpha-D-glucosamine is bound by residues Arg-334 and Lys-352. His-364 serves as the catalytic Proton acceptor. UDP-N-acetyl-alpha-D-glucosamine contacts are provided by Tyr-367 and Asn-378. Residues Ala-381, 387-388, Ser-406, Ala-424, and Arg-441 contribute to the acetyl-CoA site; that span reads NY.

This sequence in the N-terminal section; belongs to the N-acetylglucosamine-1-phosphate uridyltransferase family. The protein in the C-terminal section; belongs to the transferase hexapeptide repeat family. Homotrimer. Mg(2+) is required as a cofactor.

It localises to the cytoplasm. It carries out the reaction alpha-D-glucosamine 1-phosphate + acetyl-CoA = N-acetyl-alpha-D-glucosamine 1-phosphate + CoA + H(+). It catalyses the reaction N-acetyl-alpha-D-glucosamine 1-phosphate + UTP + H(+) = UDP-N-acetyl-alpha-D-glucosamine + diphosphate. Its pathway is nucleotide-sugar biosynthesis; UDP-N-acetyl-alpha-D-glucosamine biosynthesis; N-acetyl-alpha-D-glucosamine 1-phosphate from alpha-D-glucosamine 6-phosphate (route II): step 2/2. It participates in nucleotide-sugar biosynthesis; UDP-N-acetyl-alpha-D-glucosamine biosynthesis; UDP-N-acetyl-alpha-D-glucosamine from N-acetyl-alpha-D-glucosamine 1-phosphate: step 1/1. It functions in the pathway bacterial outer membrane biogenesis; LPS lipid A biosynthesis. In terms of biological role, catalyzes the last two sequential reactions in the de novo biosynthetic pathway for UDP-N-acetylglucosamine (UDP-GlcNAc). The C-terminal domain catalyzes the transfer of acetyl group from acetyl coenzyme A to glucosamine-1-phosphate (GlcN-1-P) to produce N-acetylglucosamine-1-phosphate (GlcNAc-1-P), which is converted into UDP-GlcNAc by the transfer of uridine 5-monophosphate (from uridine 5-triphosphate), a reaction catalyzed by the N-terminal domain. The protein is Bifunctional protein GlmU of Xylella fastidiosa (strain M12).